A 260-amino-acid polypeptide reads, in one-letter code: Dolichol-phosphate mannosyltransferase subunit 1 (260 aa).

The tract at residues 1–20 is disordered; the sequence is MAAEEASRSSPRFRREPKGR. The residue at position 2 (Ala2) is an N-acetylalanine. Residue Ser9 is modified to Phosphoserine. Residues Pro32, Tyr34, Glu36, Ile63, Asp65, Asp118, Ala119, Asp120, Arg147, Arg234, and Lys240 each coordinate GDP-alpha-D-mannose. Mg(2+) is bound at residue Asp120. Asp120 contacts Mn(2+).

Belongs to the glycosyltransferase 2 family. As to quaternary structure, component of the dolichol-phosphate mannose (DPM) synthase complex composed of DPM1, DPM2 and DPM3; within the complex, directly interacts with DPM3. This interaction may stabilize DPM1. Mg(2+) serves as cofactor. The cofactor is Mn(2+). Requires Ca(2+) as cofactor.

Its subcellular location is the endoplasmic reticulum. It catalyses the reaction a di-trans,poly-cis-dolichyl phosphate + GDP-alpha-D-mannose = a di-trans,poly-cis-dolichyl beta-D-mannosyl phosphate + GDP. It functions in the pathway protein modification; protein glycosylation. Its function is as follows. Transfers mannose from GDP-mannose to dolichol monophosphate to form dolichol phosphate mannose (Dol-P-Man) which is the mannosyl donor in pathways leading to N-glycosylation, glycosyl phosphatidylinositol membrane anchoring, and O-mannosylation of proteins; catalytic subunit of the dolichol-phosphate mannose (DPM) synthase complex. The protein is Dolichol-phosphate mannosyltransferase subunit 1 (DPM1) of Bos taurus (Bovine).